Here is a 121-residue protein sequence, read N- to C-terminus: Large ribosomal subunit protein uL14 (121 aa).

It belongs to the universal ribosomal protein uL14 family. In terms of assembly, part of the 50S ribosomal subunit. Forms a cluster with proteins L3 and L19. In the 70S ribosome, L14 and L19 interact and together make contacts with the 16S rRNA in bridges B5 and B8.

Binds to 23S rRNA. Forms part of two intersubunit bridges in the 70S ribosome. In Hydrogenobaculum sp. (strain Y04AAS1), this protein is Large ribosomal subunit protein uL14.